Reading from the N-terminus, the 274-residue chain is uncharacterized protein (274 aa).

Positions 1–19 (MKRINKVLLSLLCLVIAYA) are cleaved as a signal peptide.

This is an uncharacterized protein from Rickettsia prowazekii (strain Madrid E).